A 313-amino-acid chain; its full sequence is Aspartate carbamoyltransferase catalytic subunit (313 aa).

Carbamoyl phosphate is bound by residues Arg51 and Thr52. Lys80 is a binding site for L-aspartate. 3 residues coordinate carbamoyl phosphate: Arg101, His129, and Gln132. L-aspartate contacts are provided by Arg162 and Arg224. Carbamoyl phosphate contacts are provided by Leu263 and Pro264.

It belongs to the aspartate/ornithine carbamoyltransferase superfamily. ATCase family. Heterododecamer (2C3:3R2) of six catalytic PyrB chains organized as two trimers (C3), and six regulatory PyrI chains organized as three dimers (R2).

The enzyme catalyses carbamoyl phosphate + L-aspartate = N-carbamoyl-L-aspartate + phosphate + H(+). Its pathway is pyrimidine metabolism; UMP biosynthesis via de novo pathway; (S)-dihydroorotate from bicarbonate: step 2/3. Its function is as follows. Catalyzes the condensation of carbamoyl phosphate and aspartate to form carbamoyl aspartate and inorganic phosphate, the committed step in the de novo pyrimidine nucleotide biosynthesis pathway. The protein is Aspartate carbamoyltransferase catalytic subunit of Bacteroides thetaiotaomicron (strain ATCC 29148 / DSM 2079 / JCM 5827 / CCUG 10774 / NCTC 10582 / VPI-5482 / E50).